Consider the following 228-residue polypeptide: UPF0758 protein SH1266 (228 aa).

The 123-residue stretch at 102 to 224 (KITSPSDVSN…YASLVEEGYF (123 aa)) folds into the MPN domain. Residues His-173, His-175, and Asp-186 each coordinate Zn(2+). Positions 173 to 186 (HNHPSGDVTPSKED) match the JAMM motif motif.

It belongs to the UPF0758 family.

In Staphylococcus haemolyticus (strain JCSC1435), this protein is UPF0758 protein SH1266.